Here is a 1690-residue protein sequence, read N- to C-terminus: DNA-directed RNA polymerase subunit beta' (1690 aa).

Zn(2+) is bound by residues cysteine 63, cysteine 65, cysteine 78, and cysteine 81. The Mg(2+) site is built by aspartate 753, aspartate 755, and aspartate 757. Zn(2+)-binding residues include cysteine 1107, cysteine 1295, cysteine 1302, and cysteine 1305.

It belongs to the RNA polymerase beta' chain family. The RNAP catalytic core consists of 2 alpha, 1 beta, 1 beta' and 1 omega subunit. When a sigma factor is associated with the core the holoenzyme is formed, which can initiate transcription. The cofactor is Mg(2+). Zn(2+) is required as a cofactor.

It catalyses the reaction RNA(n) + a ribonucleoside 5'-triphosphate = RNA(n+1) + diphosphate. In terms of biological role, DNA-dependent RNA polymerase catalyzes the transcription of DNA into RNA using the four ribonucleoside triphosphates as substrates. This is DNA-directed RNA polymerase subunit beta' from Thermotoga neapolitana (strain ATCC 49049 / DSM 4359 / NBRC 107923 / NS-E).